Consider the following 638-residue polypeptide: 2-isopropylmalate synthase (638 aa).

One can recognise a Pyruvate carboxyltransferase domain in the interval 72-346 (PRWCSVDLRD…DPQLDLSNVP (275 aa)). Positions 81, 285, 287, and 321 each coordinate Mg(2+). The segment at 488–638 (VEQSGMTAAG…SAINRSQRQR (151 aa)) is regulatory domain.

This sequence belongs to the alpha-IPM synthase/homocitrate synthase family. LeuA type 2 subfamily. As to quaternary structure, homodimer. Requires Mg(2+) as cofactor.

It localises to the cytoplasm. The enzyme catalyses 3-methyl-2-oxobutanoate + acetyl-CoA + H2O = (2S)-2-isopropylmalate + CoA + H(+). It functions in the pathway amino-acid biosynthesis; L-leucine biosynthesis; L-leucine from 3-methyl-2-oxobutanoate: step 1/4. Functionally, catalyzes the condensation of the acetyl group of acetyl-CoA with 3-methyl-2-oxobutanoate (2-ketoisovalerate) to form 3-carboxy-3-hydroxy-4-methylpentanoate (2-isopropylmalate). The sequence is that of 2-isopropylmalate synthase from Bifidobacterium longum subsp. infantis (strain ATCC 15697 / DSM 20088 / JCM 1222 / NCTC 11817 / S12).